Here is a 225-residue protein sequence, read N- to C-terminus: THAP domain-containing protein 1 A (225 aa).

The THAP-type zinc finger occupies 5 to 57 (CSAYGCKNRYDKDKPISFHKFPLKRPLLCKKWEAAVRRAEFKPTKYSSICSDH). A coiled-coil region spans residues 139–194 (VEDTVHQRRRIQQLEEQVDKLRKKLKIANQKCRRQERSLEKLEREVSEYREAKGSG).

It belongs to the THAP1 family.

Its subcellular location is the nucleus. It localises to the nucleoplasm. DNA-binding transcription regulator that regulates endothelial cell proliferation and G1/S cell-cycle progression. Specifically binds the 5'-[AT]NTNN[GT]GGCA[AGT]-3' core DNA sequence and acts by modulating expression of pRB-E2F cell-cycle target genes. This chain is THAP domain-containing protein 1 A (thap1-a), found in Xenopus laevis (African clawed frog).